A 277-amino-acid polypeptide reads, in one-letter code: uncharacterized protein (277 aa).

2 disordered regions span residues 1–103 and 254–277; these read PPLR…LEDP and PSPS…SPPR. Over residues 48–65 the composition is skewed to basic and acidic residues; the sequence is RRNDTGKDRGTHRQRAET. Residues 66–77 are compositionally biased toward polar residues; the sequence is PSRSPVPTTNTV. Residues 82-91 are compositionally biased toward basic residues; that stretch reads PAVRRQRRTQ.

This is an uncharacterized protein from Homo sapiens (Human).